Reading from the N-terminus, the 524-residue chain is L-tyrosine:2-oxoglutarate aminotransferase atrD (524 aa).

Belongs to the class-I pyridoxal-phosphate-dependent aminotransferase family. Requires pyridoxal 5'-phosphate as cofactor.

It catalyses the reaction L-tyrosine + 2-oxoglutarate = 3-(4-hydroxyphenyl)pyruvate + L-glutamate. It functions in the pathway secondary metabolite biosynthesis. The L-tyrosine:2-oxoglutarate aminotransferase atrD and the atromentin synthetase atrA catalyze consecutive steps to turn over L-tyrosine into atromentin, which represents the generic precursor molecule for the entire terphenylquinone and pulvinic acid family of pigments, which are widely distributed secondary metabolites in homobasidiomycetes. The first step is catalyzed by atrD which converts L-tyrosine in to 4-hydroxyphenylpyruvate (4-HPP). Adenylation of two 4-HPP monomers by the atrA adenylation (A) domain, ester bond formation between monomers and atrA, and symmetric C-C-bond formation between two monomers by atrA leads to atromentin. This Tapinella panuoides (Oyster rollrim mushroom) protein is L-tyrosine:2-oxoglutarate aminotransferase atrD.